Consider the following 206-residue polypeptide: UPF0328 protein ECU01_0050/ECU01_1560 (206 aa).

2 disordered regions span residues Met1–Thr153 and Gly179–Leu206. Basic and acidic residues predominate over residues His74–Ser96. 2 stretches are compositionally biased toward polar residues: residues Pro97–Thr120 and Ser132–His148.

It belongs to the UPF0328 family.

The sequence is that of UPF0328 protein ECU01_0050/ECU01_1560 from Encephalitozoon cuniculi (strain GB-M1) (Microsporidian parasite).